A 200-amino-acid polypeptide reads, in one-letter code: MTDFQFYLASNSPRRAQILQQLGFRFALCCCEIDETPLPDEKGADYVLRMAIEKNNAARQQWQQAKFSQNRPHLPFLSADTSVILEDKILGKPKNEADARAMLRALSARTHQVITAVCVADENQMQTVIQTSHVRFKVLTEKEIQGYIATGEPMDKAGAYGIQQLGGVFVEHIEGSFSGVMGLPVCETVALLKAFGVELF.

Residue aspartate 80 is the Proton acceptor of the active site.

It belongs to the Maf family. YhdE subfamily. It depends on a divalent metal cation as a cofactor.

It localises to the cytoplasm. The enzyme catalyses dTTP + H2O = dTMP + diphosphate + H(+). The catalysed reaction is UTP + H2O = UMP + diphosphate + H(+). In terms of biological role, nucleoside triphosphate pyrophosphatase that hydrolyzes dTTP and UTP. May have a dual role in cell division arrest and in preventing the incorporation of modified nucleotides into cellular nucleic acids. This Pasteurella multocida (strain Pm70) protein is dTTP/UTP pyrophosphatase.